The following is a 303-amino-acid chain: uncharacterized protein (303 aa).

Residues 7–12 (GAGGVG) and Asn-101 each bind NADP(+). Lys-184 (proton donor) is an active-site residue. An NADP(+)-binding site is contributed by Glu-267.

It belongs to the ketopantoate reductase family.

This is an uncharacterized protein from Bacillus subtilis (strain 168).